The sequence spans 417 residues: Serine hydroxymethyltransferase (417 aa).

Residues L121 and 125-127 contribute to the (6S)-5,6,7,8-tetrahydrofolate site; that span reads GHL. An N6-(pyridoxal phosphate)lysine modification is found at K230. E245 serves as a coordination point for (6S)-5,6,7,8-tetrahydrofolate.

This sequence belongs to the SHMT family. Homodimer. The cofactor is pyridoxal 5'-phosphate.

Its subcellular location is the cytoplasm. It catalyses the reaction (6R)-5,10-methylene-5,6,7,8-tetrahydrofolate + glycine + H2O = (6S)-5,6,7,8-tetrahydrofolate + L-serine. Its pathway is one-carbon metabolism; tetrahydrofolate interconversion. It functions in the pathway amino-acid biosynthesis; glycine biosynthesis; glycine from L-serine: step 1/1. Its function is as follows. Catalyzes the reversible interconversion of serine and glycine with tetrahydrofolate (THF) serving as the one-carbon carrier. This reaction serves as the major source of one-carbon groups required for the biosynthesis of purines, thymidylate, methionine, and other important biomolecules. Also exhibits THF-independent aldolase activity toward beta-hydroxyamino acids, producing glycine and aldehydes, via a retro-aldol mechanism. The protein is Serine hydroxymethyltransferase of Desulfitobacterium hafniense (strain DSM 10664 / DCB-2).